Consider the following 384-residue polypeptide: Spermidine/putrescine import ATP-binding protein PotA (384 aa).

The region spanning 6–238 is the ABC transporter domain; sequence ITFNNVSKTF…PINHFVANFI (233 aa). Residue 40–47 coordinates ATP; the sequence is GASGSGKS.

It belongs to the ABC transporter superfamily. Spermidine/putrescine importer (TC 3.A.1.11.1) family. In terms of assembly, the complex is composed of two ATP-binding proteins (PotA), two transmembrane proteins (PotB and PotC) and a solute-binding protein (PotD).

The protein resides in the cell membrane. It catalyses the reaction ATP + H2O + polyamine-[polyamine-binding protein]Side 1 = ADP + phosphate + polyamineSide 2 + [polyamine-binding protein]Side 1.. In terms of biological role, part of the ABC transporter complex PotABCD involved in spermidine/putrescine import. Responsible for energy coupling to the transport system. The sequence is that of Spermidine/putrescine import ATP-binding protein PotA from Streptococcus pyogenes serotype M18 (strain MGAS8232).